The sequence spans 586 residues: CTP synthase 2 (586 aa).

Positions 300–554 (SIALVGKYTK…LAATGNLNAH (255 aa)) constitute a Glutamine amidotransferase type-1 domain. Residues cysteine 399, histidine 526, and glutamate 528 each act as for GATase activity in the active site. Residues serine 568, serine 571, and serine 574 each carry the phosphoserine modification.

The protein belongs to the CTP synthase family.

It carries out the reaction UTP + L-glutamine + ATP + H2O = CTP + L-glutamate + ADP + phosphate + 2 H(+). It participates in pyrimidine metabolism; CTP biosynthesis via de novo pathway; CTP from UDP: step 2/2. Functionally, catalyzes the ATP-dependent amination of UTP to CTP with either L-glutamine or ammonia as the source of nitrogen. Constitutes the rate-limiting enzyme in the synthesis of cytosine nucleotides. The polypeptide is CTP synthase 2 (Ctps2) (Mus musculus (Mouse)).